The following is a 362-amino-acid chain: Molybdenum import ATP-binding protein ModC (362 aa).

One can recognise an ABC transporter domain in the interval 2-236 (VSPIEVRLQM…LDLPLAMGDD (235 aa)). Residue 34–41 (GPSGSGKT) participates in ATP binding. In terms of domain architecture, Mop spans 297-362 (HSSILNRLPV…AQIKAVAVLA (66 aa)).

This sequence belongs to the ABC transporter superfamily. Molybdate importer (TC 3.A.1.8) family. In terms of assembly, the complex is composed of two ATP-binding proteins (ModC), two transmembrane proteins (ModB) and a solute-binding protein (ModA).

It is found in the cell inner membrane. The enzyme catalyses molybdate(out) + ATP + H2O = molybdate(in) + ADP + phosphate + H(+). Functionally, part of the ABC transporter complex ModABC involved in molybdenum import. Responsible for energy coupling to the transport system. In Pseudomonas syringae pv. tomato (strain ATCC BAA-871 / DC3000), this protein is Molybdenum import ATP-binding protein ModC.